The primary structure comprises 499 residues: Maturase K (499 aa).

It belongs to the intron maturase 2 family. MatK subfamily.

It localises to the plastid. It is found in the chloroplast. Its function is as follows. Usually encoded in the trnK tRNA gene intron. Probably assists in splicing its own and other chloroplast group II introns. The chain is Maturase K from Batis maritima (Maritime saltwort).